The chain runs to 453 residues: Trigger factor (453 aa).

Residues 171–256 (GDRVTVSFKG…ATLVEAPKDT (86 aa)) form the PPIase FKBP-type domain.

Belongs to the FKBP-type PPIase family. Tig subfamily.

The protein resides in the cytoplasm. The enzyme catalyses [protein]-peptidylproline (omega=180) = [protein]-peptidylproline (omega=0). Involved in protein export. Acts as a chaperone by maintaining the newly synthesized protein in an open conformation. Functions as a peptidyl-prolyl cis-trans isomerase. This chain is Trigger factor, found in Rhodopseudomonas palustris (strain BisA53).